We begin with the raw amino-acid sequence, 158 residues long: Putative zinc-binding protein ORF9 (158 aa).

An RING-type; degenerate zinc finger spans residues 72-111 (CPVCGRAVVGPTVREACGHVTCNACETEACAVDRLCIGGG). A disordered region spans residues 126-158 (GPRWRGPRPTRPEAHEAVQRSRGSSEDACTCAP). The segment covering 135–150 (TRPEAHEAVQRSRGSS) has biased composition (basic and acidic residues).

This chain is Putative zinc-binding protein ORF9 (ORF9), found in Ictalurid herpesvirus 1 (strain Auburn) (IcHV-1).